The primary structure comprises 69 residues: DNA gyrase inhibitor YacG (69 aa).

Zn(2+) is bound by residues Cys13, Cys16, Cys32, and Cys36.

Belongs to the DNA gyrase inhibitor YacG family. Interacts with GyrB. Requires Zn(2+) as cofactor.

Inhibits all the catalytic activities of DNA gyrase by preventing its interaction with DNA. Acts by binding directly to the C-terminal domain of GyrB, which probably disrupts DNA binding by the gyrase. This is DNA gyrase inhibitor YacG from Neisseria meningitidis serogroup A / serotype 4A (strain DSM 15465 / Z2491).